Consider the following 85-residue polypeptide: Sec-independent protein translocase protein TatA (85 aa).

Residues 1–21 (MAGLQGWQLVIIILLAILLFA) traverse the membrane as a helical segment. The segment at 43 to 85 (VKQMRTEGKDAKDERSGTGSTAADEPVEGRVVDRDETDPRDQR) is disordered. 2 stretches are compositionally biased toward basic and acidic residues: residues 44-58 (KQMR…DERS) and 69-85 (VEGR…RDQR).

The protein belongs to the TatA/E family. As to quaternary structure, the Tat system comprises two distinct complexes: a TatABC complex, containing multiple copies of TatA, TatB and TatC subunits, and a separate TatA complex, containing only TatA subunits. Substrates initially bind to the TatABC complex, which probably triggers association of the separate TatA complex to form the active translocon.

It is found in the cell membrane. Its function is as follows. Part of the twin-arginine translocation (Tat) system that transports large folded proteins containing a characteristic twin-arginine motif in their signal peptide across membranes. TatA could form the protein-conducting channel of the Tat system. This Micrococcus luteus (strain ATCC 4698 / DSM 20030 / JCM 1464 / CCM 169 / CCUG 5858 / IAM 1056 / NBRC 3333 / NCIMB 9278 / NCTC 2665 / VKM Ac-2230) (Micrococcus lysodeikticus) protein is Sec-independent protein translocase protein TatA.